A 58-amino-acid chain; its full sequence is MKNTILILFTAFIALLGFFGMSAEALADPKADPLAGPNPDADPEAINLKAIAALARNY.

The N-terminal stretch at 1-27 (MKNTILILFTAFIALLGFFGMSAEALA) is a signal peptide. AXPX repeat units follow at residues 27–30 (ADPK), 31–34 (ADPL), 35–38 (AGPN), and 41–44 (ADPE). Positions 28-45 (DPKADPLAGPNPDADPEA) are excised as a propeptide.

This sequence belongs to the MCD family. Mastoparan subfamily. In terms of tissue distribution, expressed by the venom gland.

It is found in the secreted. In terms of biological role, the synthetic peptide shows antimicrobial activities against Gram-negative bacteria (but not against all strains tested), Gram-positive bacteria (all strains tested) and the fungi C.albicans (but not C.parapsilosis). Exhibits little hemolytic activity against washed human erythrocytes. The sequence is that of Mastoparan-VT7 from Vespa tropica (Greater banded hornet).